The sequence spans 311 residues: Glycine--tRNA ligase alpha subunit (311 aa).

The protein belongs to the class-II aminoacyl-tRNA synthetase family. In terms of assembly, tetramer of two alpha and two beta subunits.

The protein localises to the cytoplasm. It catalyses the reaction tRNA(Gly) + glycine + ATP = glycyl-tRNA(Gly) + AMP + diphosphate. This is Glycine--tRNA ligase alpha subunit from Brucella anthropi (strain ATCC 49188 / DSM 6882 / CCUG 24695 / JCM 21032 / LMG 3331 / NBRC 15819 / NCTC 12168 / Alc 37) (Ochrobactrum anthropi).